We begin with the raw amino-acid sequence, 879 residues long: Valine--tRNA ligase (879 aa).

Positions 43 to 53 match the 'HIGH' region motif; the sequence is PNVTGVLHMGH. A 'KMSKS' region motif is present at residues 534–538; the sequence is KMSKS. Lys-537 is an ATP binding site. The stretch at 807 to 878 forms a coiled coil; it reads LGNMIDVEAE…LKESIAALKK (72 aa).

Belongs to the class-I aminoacyl-tRNA synthetase family. ValS type 1 subfamily. Monomer.

It is found in the cytoplasm. It carries out the reaction tRNA(Val) + L-valine + ATP = L-valyl-tRNA(Val) + AMP + diphosphate. In terms of biological role, catalyzes the attachment of valine to tRNA(Val). As ValRS can inadvertently accommodate and process structurally similar amino acids such as threonine, to avoid such errors, it has a 'posttransfer' editing activity that hydrolyzes mischarged Thr-tRNA(Val) in a tRNA-dependent manner. In Bacteroides thetaiotaomicron (strain ATCC 29148 / DSM 2079 / JCM 5827 / CCUG 10774 / NCTC 10582 / VPI-5482 / E50), this protein is Valine--tRNA ligase.